The sequence spans 1338 residues: Serine/threonine-protein kinase cek1 (1338 aa).

Residues 28 to 98 form the PAS domain; the sequence is SKDENLQPSI…RAVNCLLKDD (71 aa). The tract at residues 484–554 is disordered; the sequence is PDFAIGSPMS…GRSSLFSRGR (71 aa). Residues 491 to 501 are compositionally biased toward polar residues; sequence PMSQDSSNYSS. Ser-525 is modified (phosphoserine). Residues 541–550 show a composition bias toward polar residues; that stretch reads PASNGRSSLF. Residues 589–958 form the Protein kinase domain; it reads YKILKPISKG…VEEIKAHPFF (370 aa). Residues 595 to 603 and Lys-618 each bind ATP; that span reads ISKGAFGSV. The active-site Proton acceptor is the Asp-713. Phosphoserine is present on Ser-748. The span at 813–842 shows a compositional bias: polar residues; sequence ENSAEDSPTATNTPTSQVDESNIFRSTDSP. Disordered regions lie at residues 813–844, 1010–1035, and 1159–1185; these read ENSAEDSPTATNTPTSQVDESNIFRSTDSPRV, KLEEERPASSIPQHVSGNRKGRLRSN, and SSTMSASQSQSSMHTALPDVTEGTSSD. One can recognise an AGC-kinase C-terminal domain in the interval 959–1057; that stretch reads KSVNWDTILE…RNLDFLNKAN (99 aa). Over residues 1159-1174 the composition is skewed to low complexity; the sequence is SSTMSASQSQSSMHTA. Residue Ser-1211 is modified to Phosphoserine.

The protein belongs to the protein kinase superfamily. Ser/Thr protein kinase family.

It carries out the reaction L-seryl-[protein] + ATP = O-phospho-L-seryl-[protein] + ADP + H(+). It catalyses the reaction L-threonyl-[protein] + ATP = O-phospho-L-threonyl-[protein] + ADP + H(+). Functionally, may facilitate the progression of anaphase through direct or indirect interaction with the cut8 protein. This chain is Serine/threonine-protein kinase cek1 (cek1), found in Schizosaccharomyces pombe (strain 972 / ATCC 24843) (Fission yeast).